Consider the following 347-residue polypeptide: Tetraacyldisaccharide 4'-kinase (347 aa).

Position 64 to 71 (64 to 71 (YVGGTGKT)) interacts with ATP.

Belongs to the LpxK family.

The catalysed reaction is a lipid A disaccharide + ATP = a lipid IVA + ADP + H(+). The protein operates within glycolipid biosynthesis; lipid IV(A) biosynthesis; lipid IV(A) from (3R)-3-hydroxytetradecanoyl-[acyl-carrier-protein] and UDP-N-acetyl-alpha-D-glucosamine: step 6/6. Transfers the gamma-phosphate of ATP to the 4'-position of a tetraacyldisaccharide 1-phosphate intermediate (termed DS-1-P) to form tetraacyldisaccharide 1,4'-bis-phosphate (lipid IVA). The chain is Tetraacyldisaccharide 4'-kinase from Bordetella bronchiseptica (strain ATCC BAA-588 / NCTC 13252 / RB50) (Alcaligenes bronchisepticus).